The primary structure comprises 309 residues: uncharacterized protein (309 aa).

It belongs to the OprB family.

This is an uncharacterized protein from Aquifex aeolicus (strain VF5).